The sequence spans 125 residues: Probable endoribonuclease HigB1 (125 aa).

Belongs to the mycobacterial HigB family.

Functionally, toxic component of an atypical, type II toxin-antitoxin chaperone (TAC) system. Probably an endoribonuclease, neutralized by its cognate antitoxin HigA which also requires SecB-like chaperone MT2006 (AC Q7D7P7). The chain is Probable endoribonuclease HigB1 from Mycobacterium tuberculosis (strain CDC 1551 / Oshkosh).